Consider the following 563-residue polypeptide: MAEICASAAPISTKNTSVEELRRSVTYHPSVWRDHFLSYTNDVTEITAAEKEELEKQKEKVKNLLDQTPNDSTLKIELIDAIQRLGFGYHFEEVIDESLGEVYDRYEMPSGKDDEDEIRVRSLRFRLLRQQGYRVPCDVFEKLLDDKGNFKDSLITDVEGLLSLYEASNYGINGEEIMDKALKFSSSHLEGSIHKMPTSLSRRVKEALDMPISKTLTRLGARKFISLYQEDESHNELLLKFAKLDFNIVQKMHQRELHHITRWWEGLEFGKKLPFARDRVVECFFWILGVYFEPKYEIARRFLTKVISMTSILDDIYDVYGSLDELRRLTHAIQRWDISVGDELPPYMRICYEALLGVYSEMEDEMAKKGQSYRLLYARQEMIKLVMAYMVEAEWCFSKYFPTMEEYMKQALVSGAYMMLSTTSLVGMEDLNITKHDFDWITSEPPMLRAASVICRLMDDMVGHGIEQKIISVDCYMRENGCSKEEACREFWNRVKKAWKCMNEECLEPRAASMAILARVLNLARVINLLYVGEDAYGSSSTKTKNFIKSVLVDPIHSIEYHI.

The stretch at 44–71 (TEITAAEKEELEKQKEKVKNLLDQTPND) forms a coiled coil. 2 residues coordinate Mn(2+): Asp314 and Asp318. The DDXXD motif motif lies at 314 to 318 (DDIYD). Homodimerization stretches follow at residues 320-326 (YGSLDEL) and 392-429 (EAEWCFSKYFPTMEEYMKQALVSGAYMMLSTTSLVGME). 2 residues coordinate Mn(2+): Asp459 and Glu467.

It belongs to the terpene synthase family. In terms of assembly, homodimer. Mn(2+) serves as cofactor. The cofactor is Mg(2+). Expressed in peltate glandular trichomes. Present at low levels in flowers, leaves and stems.

It catalyses the reaction (2E,6E)-farnesyl diphosphate = (-)-germacrene D + diphosphate. It participates in secondary metabolite biosynthesis; terpenoid biosynthesis. Its function is as follows. Involved in the biosynthesis of phenolic sesquiterpenes natural products. Sesquiterpene synthase that catalyzes mainly the formation of (-)-germacrene D and minor amounts of other sesquiterpenes (e.g. bicyclo-germacrene) from farnesyl diphosphate (FPP). Also triggers moderate amounts formation of myrcene, limonene, terpinolene and linalool in the presence of geranyl diphosphate (GPP). The polypeptide is (-)-germacrene D synthase (Origanum vulgare (Wild marjoram)).